The sequence spans 865 residues: Leucine--tRNA ligase (865 aa).

The short motif at 44-54 (PYPSGRIHVGH) is the 'HIGH' region element. Residues 625–629 (KMSKS) carry the 'KMSKS' region motif. Lysine 628 serves as a coordination point for ATP.

Belongs to the class-I aminoacyl-tRNA synthetase family.

It is found in the cytoplasm. The enzyme catalyses tRNA(Leu) + L-leucine + ATP = L-leucyl-tRNA(Leu) + AMP + diphosphate. The chain is Leucine--tRNA ligase from Maricaulis maris (strain MCS10) (Caulobacter maris).